Here is a 502-residue protein sequence, read N- to C-terminus: Cytochrome P450 71A8 (502 aa).

Residues 16-36 form a helical membrane-spanning segment; sequence IISHTLAFQALVSLILLISIT. The tract at residues 93–119 is disordered; the sequence is PVSSRRRPRGNHENSRSRLRRPRGSRS. Cysteine 447 contacts heme.

The protein belongs to the cytochrome P450 family. Requires heme as cofactor.

The protein localises to the membrane. In Mentha piperita (Peppermint), this protein is Cytochrome P450 71A8 (CYP71A8).